Reading from the N-terminus, the 89-residue chain is Small ribosomal subunit protein bS18 (89 aa).

This sequence belongs to the bacterial ribosomal protein bS18 family. As to quaternary structure, part of the 30S ribosomal subunit. Forms a tight heterodimer with protein bS6.

Functionally, binds as a heterodimer with protein bS6 to the central domain of the 16S rRNA, where it helps stabilize the platform of the 30S subunit. This chain is Small ribosomal subunit protein bS18, found in Parabacteroides distasonis (strain ATCC 8503 / DSM 20701 / CIP 104284 / JCM 5825 / NCTC 11152).